A 118-amino-acid chain; its full sequence is uncharacterized protein (118 aa).

This sequence to M.jannaschii MJ0310 and MJ1340.

This is an uncharacterized protein from Methanocaldococcus jannaschii (strain ATCC 43067 / DSM 2661 / JAL-1 / JCM 10045 / NBRC 100440) (Methanococcus jannaschii).